A 254-amino-acid chain; its full sequence is L-rhamnose 1-dehydrogenase (NAD(P)(+)) (254 aa).

Residues Gly13, Ser15, Ile18, Asp64, Val65, and Asn91 each contribute to the NADP(+) site. Ser144 (proton donor) is an active-site residue. Beta-L-rhamnose contacts are provided by Ser144, Ser146, Gln154, and Tyr157. 2 residues coordinate NADP(+): Tyr157 and Lys161. Residue Tyr157 is the Proton acceptor of the active site. Lys161 serves as the catalytic Lowers pKa of active site Tyr. Residue Thr189 participates in beta-L-rhamnose binding. Ile190 lines the NADP(+) pocket. Asn195 provides a ligand contact to beta-L-rhamnose.

Belongs to the short-chain dehydrogenases/reductases (SDR) family.

The enzyme catalyses L-rhamnofuranose + NAD(+) = L-rhamnono-1,4-lactone + NADH + H(+). It catalyses the reaction L-rhamnofuranose + NADP(+) = L-rhamnono-1,4-lactone + NADPH + H(+). Its pathway is carbohydrate degradation; L-rhamnose degradation. In terms of biological role, NAD(P)-dependent dehydrogenase that catalyzes the oxidation of L-rhamnose to L-rhamnono-1,4-lactone. Also shows high activity with L-lyxose and low activity with L-mannose. Can utilize either NAD(+) or NADP(+), with a slight preference for NADP(+). Catalyzes the first step in an alternative pathway for rhamnose utilization that does not involve phosphorylated intermediates. This is L-rhamnose 1-dehydrogenase (NAD(P)(+)) from Sphingomonas sp. (strain SKA58).